Reading from the N-terminus, the 114-residue chain is Vacuolar ATPase assembly integral membrane protein VMA21 (114 aa).

The Cytoplasmic segment spans residues Met-1–Ser-39. Residues Val-40–Phe-60 form a helical membrane-spanning segment. Topologically, residues Ala-61–Tyr-73 are lumenal. Residues Ala-74–Met-94 form a helical membrane-spanning segment. The Cytoplasmic segment spans residues Ala-95–Arg-114. The Prevents secretion from ER signature appears at Lys-111–Arg-114.

The protein belongs to the VMA21 family.

The protein localises to the endoplasmic reticulum membrane. Its subcellular location is the endoplasmic reticulum-Golgi intermediate compartment membrane. It localises to the cytoplasmic vesicle. The protein resides in the COPII-coated vesicle membrane. Its function is as follows. Required for the assembly of the V0 complex of the vacuolar ATPase (V-ATPase) in the endoplasmic reticulum. This Chaetomium globosum (strain ATCC 6205 / CBS 148.51 / DSM 1962 / NBRC 6347 / NRRL 1970) (Soil fungus) protein is Vacuolar ATPase assembly integral membrane protein VMA21.